The chain runs to 180 residues: Inner membrane-spanning protein YciB (180 aa).

The next 5 helical transmembrane spans lie at 22–42 (IFVA…FTWL), 50–70 (MTLV…AFHS), 72–92 (LFIK…LLVS), 121–141 (LSWA…AFWL), and 149–169 (FKVF…GVYI).

This sequence belongs to the YciB family.

It is found in the cell inner membrane. In terms of biological role, plays a role in cell envelope biogenesis, maintenance of cell envelope integrity and membrane homeostasis. The polypeptide is Inner membrane-spanning protein YciB (Yersinia pseudotuberculosis serotype O:1b (strain IP 31758)).